The sequence spans 276 residues: Rhomboid protease GlpG (276 aa).

The next 6 helical transmembrane spans lie at 94–114 (GPVT…MSLI), 142–162 (IFMH…WYLG), 169–189 (LGSG…GYVQ), 192–212 (FSGP…GYVW), 229–249 (LIIF…GMSM), and 250–270 (ANGA…VDTL). Catalysis depends on Ser201, which acts as the Nucleophile. The active site involves His254.

Belongs to the peptidase S54 family.

The protein localises to the cell inner membrane. The enzyme catalyses Cleaves type-1 transmembrane domains using a catalytic dyad composed of serine and histidine that are contributed by different transmembrane domains.. In terms of biological role, rhomboid-type serine protease that catalyzes intramembrane proteolysis. The chain is Rhomboid protease GlpG from Salmonella choleraesuis (strain SC-B67).